A 145-amino-acid polypeptide reads, in one-letter code: 3-hydroxyacyl-[acyl-carrier-protein] dehydratase FabZ (145 aa).

Residue His-50 is part of the active site.

This sequence belongs to the thioester dehydratase family. FabZ subfamily.

It localises to the cytoplasm. The catalysed reaction is a (3R)-hydroxyacyl-[ACP] = a (2E)-enoyl-[ACP] + H2O. Involved in unsaturated fatty acids biosynthesis. Catalyzes the dehydration of short chain beta-hydroxyacyl-ACPs and long chain saturated and unsaturated beta-hydroxyacyl-ACPs. In Coxiella burnetii (strain CbuK_Q154) (Coxiella burnetii (strain Q154)), this protein is 3-hydroxyacyl-[acyl-carrier-protein] dehydratase FabZ.